The chain runs to 433 residues: DNA polymerase processivity factor (433 aa).

The tract at residues 274-433 (RGDPFDKNYV…VPNTKKQKCG (160 aa)) is disordered. 3 stretches are compositionally biased toward gly residues: residues 289 to 298 (SRGGGGGGGS), 325 to 336 (GLGGLGGGGGGG), and 344 to 359 (GGGG…GGGG). Positions 360-376 (GDHDHGLSSKEKYEQHK) are enriched in basic and acidic residues. Residues 385-398 (GGSGGGGGGGGGGL) show a composition bias toward gly residues. Residue lysine 410 forms a Glycyl lysine isopeptide (Lys-Gly) (interchain with G-Cter in host SUMO1) linkage. Serine 413, serine 415, and serine 418 each carry phosphoserine.

Belongs to the herpesviridae polymerase accessory protein family. As to quaternary structure, forms homodimers. Interacts with host SMARCB1. Interacts with host NCL/nucleolin; this interaction is important for the organization of proteins within viral replication compartments. Interacts with UL112/UL113; this interaction is necessary for efficient viral DNA replication. Interacts with UL84. Interacts with the uracil DNA glycosylase UL114. Interacts with the DNA polymerase catalytic subunit UL54. Interacts with host IRF3. Interacts with host RELA. Phosphorylated by UL97 on serine residues, phosphorylation seems important for UL44 nuclear entry but does not directly affect its role in replication. In terms of processing, sumoylated. Sumoylation on Lys-410 increases viral DNA replication.

The protein localises to the virion. It is found in the host nucleus. Accessory subunit of the DNA polymerase that plays an essential role in viral DNA replication and acts by increasing the processivity of polymerization. Forms dimers that binds to double-stranded DNA and UL54 specifically to stimulates long chain DNA synthesis efficiently. Plays an important role in maintaining the structure of viral replication compartments by interacting with host nucleolin/NUC. In addition, suppresses innate immune responses through effects on host IRF3 and NF-kappa-B. Mechanistically, interfere with the binding of IRF3 and the p65 NF-kappa-B subunit to the promoters of antiviral genes, thereby inhibiting the expression of these genes. This Homo sapiens (Human) protein is DNA polymerase processivity factor (UL44).